The sequence spans 98 residues: Small ribosomal subunit protein eS24 (98 aa).

The protein belongs to the eukaryotic ribosomal protein eS24 family. In terms of assembly, part of the 30S ribosomal subunit.

The protein is Small ribosomal subunit protein eS24 of Thermococcus kodakarensis (strain ATCC BAA-918 / JCM 12380 / KOD1) (Pyrococcus kodakaraensis (strain KOD1)).